We begin with the raw amino-acid sequence, 278 residues long: Biotin synthase (278 aa).

Residues 1 to 227 (MQIMLCAISN…QSVVMVAGGR (227 aa)) form the Radical SAM core domain. [4Fe-4S] cluster contacts are provided by Cys16, Cys20, and Cys23. 3 residues coordinate [2Fe-2S] cluster: Cys60, Cys95, and Cys153.

The protein belongs to the radical SAM superfamily. Biotin synthase family. Homodimer. [4Fe-4S] cluster is required as a cofactor. The cofactor is [2Fe-2S] cluster.

It carries out the reaction (4R,5S)-dethiobiotin + (sulfur carrier)-SH + 2 reduced [2Fe-2S]-[ferredoxin] + 2 S-adenosyl-L-methionine = (sulfur carrier)-H + biotin + 2 5'-deoxyadenosine + 2 L-methionine + 2 oxidized [2Fe-2S]-[ferredoxin]. It functions in the pathway cofactor biosynthesis; biotin biosynthesis; biotin from 7,8-diaminononanoate: step 2/2. In terms of biological role, catalyzes the conversion of dethiobiotin (DTB) to biotin by the insertion of a sulfur atom into dethiobiotin via a radical-based mechanism. The polypeptide is Biotin synthase (Campylobacter jejuni subsp. doylei (strain ATCC BAA-1458 / RM4099 / 269.97)).